A 370-amino-acid chain; its full sequence is 3-dehydroquinate synthase (370 aa).

NAD(+) is bound by residues 108–112, 132–133, Lys-145, and Lys-154; these read GVVGD and TT. Glu-187, His-250, and His-268 together coordinate Zn(2+).

The protein belongs to the sugar phosphate cyclases superfamily. Dehydroquinate synthase family. Co(2+) is required as a cofactor. Zn(2+) serves as cofactor. The cofactor is NAD(+).

It localises to the cytoplasm. It carries out the reaction 7-phospho-2-dehydro-3-deoxy-D-arabino-heptonate = 3-dehydroquinate + phosphate. It participates in metabolic intermediate biosynthesis; chorismate biosynthesis; chorismate from D-erythrose 4-phosphate and phosphoenolpyruvate: step 2/7. Functionally, catalyzes the conversion of 3-deoxy-D-arabino-heptulosonate 7-phosphate (DAHP) to dehydroquinate (DHQ). The chain is 3-dehydroquinate synthase from Caulobacter vibrioides (strain NA1000 / CB15N) (Caulobacter crescentus).